The chain runs to 465 residues: Tapasin (465 aa).

Positions 1-23 (MKPLLLLVAVALGLATVVSVVSA) are cleaved as a signal peptide. Topologically, residues 24–416 (GPEAIECWFV…GFSGPSIEDG (393 aa)) are lumenal. C30 and C94 are disulfide-bonded. N256 is a glycosylation site (N-linked (GlcNAc...) asparagine). The Ig-like C1-type domain maps to 295–402 (PRVSLTPAPV…PASGRSADVT (108 aa)). C318 and C385 are disulfide-bonded. Residues 417 to 437 (IGLFLSAFLLLGLLKVLGWLA) traverse the membrane as a helical segment. At 438-465 (AYWTIPEVSKEKATAASLTIPRNSKKSQ) the chain is on the cytoplasmic side.

As to quaternary structure, heterodimer with PDIA3; disulfide-linked. Obligatory mediator for the interaction between newly assembled MHC class I molecules, calreticulin, PDIA3 and TAP. Up to 4 MHC class I/tapasin complexes bind to 1 TAP. Interacts with HLA-G-B2M complex; this interaction is required for loading of high affinity peptides. On its own or as part of MHC class I peptide loading complex, interacts with ligand-free MR1 or MR1-B2M complex, providing for stable MR1 pools ready for metabolite antigen processing.

Its subcellular location is the endoplasmic reticulum membrane. In terms of biological role, involved in the association of MHC class I with transporter associated with antigen processing (TAP) and in the assembly of MHC class I with peptide (peptide loading). This Mus musculus (Mouse) protein is Tapasin (Tapbp).